Here is a 184-residue protein sequence, read N- to C-terminus: ATP synthase subunit b, chloroplastic (184 aa).

Residues 27–49 (LATNPINLSVVFGVLIFFGKGVL) traverse the membrane as a helical segment.

The protein belongs to the ATPase B chain family. F-type ATPases have 2 components, F(1) - the catalytic core - and F(0) - the membrane proton channel. F(1) has five subunits: alpha(3), beta(3), gamma(1), delta(1), epsilon(1). F(0) has four main subunits: a(1), b(1), b'(1) and c(10-14). The alpha and beta chains form an alternating ring which encloses part of the gamma chain. F(1) is attached to F(0) by a central stalk formed by the gamma and epsilon chains, while a peripheral stalk is formed by the delta, b and b' chains.

The protein resides in the plastid. It localises to the chloroplast thylakoid membrane. Its function is as follows. F(1)F(0) ATP synthase produces ATP from ADP in the presence of a proton or sodium gradient. F-type ATPases consist of two structural domains, F(1) containing the extramembraneous catalytic core and F(0) containing the membrane proton channel, linked together by a central stalk and a peripheral stalk. During catalysis, ATP synthesis in the catalytic domain of F(1) is coupled via a rotary mechanism of the central stalk subunits to proton translocation. Functionally, component of the F(0) channel, it forms part of the peripheral stalk, linking F(1) to F(0). This chain is ATP synthase subunit b, chloroplastic, found in Draba nemorosa (Woodland whitlowgrass).